The primary structure comprises 414 residues: MTLFCEQVPYPRLAEAFGTPLYVYSQSALTEAFEHYQTAFAALNPLVCYAVKANGNLSIIKHFASLGSGFDIVSGGELARVLAAGGDAAKTIFSGVGKSEAEIEFALNAGVKCFNMESIPEIDRIQKVAARLGKTAPVSLRINPDVDAKTHPYISTGLKANKFGIAYADALEAYHYAAQQPNLKIIGIDCHIGSQLTDLSPLVEACERILILVDALAAEGIVLEHLDLGGGVGIVYQDENVPDLGAYAQAVQKLIGTRRLKLILEPGRSLVGNAGSLLTRVEFVKYGEEKNFVMVDAAMNDLMRPALYDAYHHIEAVETKDIATLTANIVGPICETGDFLGKDRTIACEEGDLLLIRSAGAYGASMASNYNARNRAAEVLVDGNEYRLIRRRETLEQQMANELACLQAEHQNAV.

Residue K52 is modified to N6-(pyridoxal phosphate)lysine. Pyridoxal 5'-phosphate contacts are provided by residues G231 and 265-268 (EPGR). Substrate contacts are provided by R268, R304, and Y308. Residue C334 is the Proton donor of the active site. Residues E335 and Y362 each contribute to the substrate site. Y362 provides a ligand contact to pyridoxal 5'-phosphate.

The protein belongs to the Orn/Lys/Arg decarboxylase class-II family. LysA subfamily. As to quaternary structure, homodimer. It depends on pyridoxal 5'-phosphate as a cofactor.

It catalyses the reaction meso-2,6-diaminopimelate + H(+) = L-lysine + CO2. It functions in the pathway amino-acid biosynthesis; L-lysine biosynthesis via DAP pathway; L-lysine from DL-2,6-diaminopimelate: step 1/1. Functionally, specifically catalyzes the decarboxylation of meso-diaminopimelate (meso-DAP) to L-lysine. This chain is Diaminopimelate decarboxylase, found in Neisseria meningitidis serogroup B (strain ATCC BAA-335 / MC58).